Here is a 316-residue protein sequence, read N- to C-terminus: Acetyl-coenzyme A carboxylase carboxyl transferase subunit alpha (316 aa).

Residues 39 to 293 (RLQDKSKALT…RGELLAQLKM (255 aa)) enclose the CoA carboxyltransferase C-terminal domain.

This sequence belongs to the AccA family. As to quaternary structure, acetyl-CoA carboxylase is a heterohexamer composed of biotin carboxyl carrier protein (AccB), biotin carboxylase (AccC) and two subunits each of ACCase subunit alpha (AccA) and ACCase subunit beta (AccD).

The protein localises to the cytoplasm. The enzyme catalyses N(6)-carboxybiotinyl-L-lysyl-[protein] + acetyl-CoA = N(6)-biotinyl-L-lysyl-[protein] + malonyl-CoA. Its pathway is lipid metabolism; malonyl-CoA biosynthesis; malonyl-CoA from acetyl-CoA: step 1/1. Functionally, component of the acetyl coenzyme A carboxylase (ACC) complex. First, biotin carboxylase catalyzes the carboxylation of biotin on its carrier protein (BCCP) and then the CO(2) group is transferred by the carboxyltransferase to acetyl-CoA to form malonyl-CoA. In Pseudomonas aeruginosa (strain UCBPP-PA14), this protein is Acetyl-coenzyme A carboxylase carboxyl transferase subunit alpha.